The following is a 190-amino-acid chain: Glutathione peroxidase 2 (190 aa).

The active site involves Sec-40. A non-standard amino acid (selenocysteine) is located at residue Sec-40.

Belongs to the glutathione peroxidase family. In terms of assembly, homotetramer.

Its subcellular location is the cytoplasm. The protein resides in the cytosol. It catalyses the reaction 2 glutathione + H2O2 = glutathione disulfide + 2 H2O. The enzyme catalyses a hydroperoxy polyunsaturated fatty acid + 2 glutathione = a hydroxy polyunsaturated fatty acid + glutathione disulfide + H2O. It carries out the reaction tert-butyl hydroperoxide + 2 glutathione = tert-butanol + glutathione disulfide + H2O. The catalysed reaction is cumene hydroperoxide + 2 glutathione = 2-phenylpropan-2-ol + glutathione disulfide + H2O. It catalyses the reaction (13S)-hydroperoxy-(9Z,11E)-octadecadienoate + 2 glutathione = (13S)-hydroxy-(9Z,11E)-octadecadienoate + glutathione disulfide + H2O. The enzyme catalyses (5S)-hydroperoxy-(6E,8Z,11Z,14Z)-eicosatetraenoate + 2 glutathione = (5S)-hydroxy-(6E,8Z,11Z,14Z)-eicosatetraenoate + glutathione disulfide + H2O. It carries out the reaction (12R)-hydroperoxy-(5Z,8Z,10E,14Z)-eicosatetraenoate + 2 glutathione = (12R)-hydroxy-(5Z,8Z,10E,14Z)-eicosatetraenoate + glutathione disulfide + H2O. The catalysed reaction is (15S)-hydroperoxy-(5Z,8Z,11Z,13E)-eicosatetraenoate + 2 glutathione = (15S)-hydroxy-(5Z,8Z,11Z,13E)-eicosatetraenoate + glutathione disulfide + H2O. Its function is as follows. Catalyzes the reduction of hydroperoxides in a glutathione-dependent manner thus regulating cellular redox homeostasis. Can reduce small soluble hydroperoxides such as H2O2, cumene hydroperoxide and tert-butyl hydroperoxide, as well as several fatty acid-derived hydroperoxides. Cannot reduce phosphatidycholine hydroperoxide. The sequence is that of Glutathione peroxidase 2 (GPX2) from Callithrix jacchus (White-tufted-ear marmoset).